A 554-amino-acid chain; its full sequence is Exonuclease V, mitochondrial (554 aa).

The N-terminal 17 residues, 1–17 (MLRCRSSINILQLHSRF), are a transit peptide targeting the mitochondrion. [4Fe-4S] cluster-binding residues include cysteine 138, cysteine 522, cysteine 525, and cysteine 531.

This sequence belongs to the EXO5 family. In terms of assembly, monomer. The cofactor is Mg(2+). It depends on [4Fe-4S] cluster as a cofactor.

Its subcellular location is the mitochondrion. Its function is as follows. Single strand DNA specific 5'exonuclease involved in mitochondrial DNA replication and recombination. Releases dinucleotides as main products of catalysis. Has the capacity to slide across 5'double-stranded DNA or 5'RNA sequences and resumes cutting two nucleotides downstream of the double-stranded-to-single-stranded junction or RNA-to-DNA junction, respectively. The sequence is that of Exonuclease V, mitochondrial (EXO5) from Vanderwaltozyma polyspora (strain ATCC 22028 / DSM 70294 / BCRC 21397 / CBS 2163 / NBRC 10782 / NRRL Y-8283 / UCD 57-17) (Kluyveromyces polysporus).